Consider the following 144-residue polypeptide: Thyrostimulin alpha-2 subunit (144 aa).

The first 41 residues, 1 to 41 (MGRRDSGRAVAQRYRGVTRGVTVIACLMVVCACVGLCDATG), serve as a signal peptide directing secretion. Cystine bridges form between Cys-52-Cys-107, Cys-66-Cys-121, Cys-76-Cys-136, and Cys-80-Cys-138.

The protein belongs to the glycoprotein hormones subunit alpha family. As to quaternary structure, heterodimer with GPHB5; non-covalently-linked. Expressed by the venom duct.

It is found in the secreted. In Conus victoriae (Queen Victoria cone), this protein is Thyrostimulin alpha-2 subunit.